The following is an 85-amino-acid chain: Sec-independent protein translocase protein TatA (85 aa).

A helical transmembrane segment spans residues 1 to 21; sequence MAGLQGWQLVIIILLAILLFA. A disordered region spans residues 43-85; sequence VKQMRTEGKDAKDERSGTGSTAADEPVEGRVVDRDETDPRDQR. Composition is skewed to basic and acidic residues over residues 44–58 and 69–85; these read KQMR…DERS and VEGR…RDQR.

It belongs to the TatA/E family. In terms of assembly, the Tat system comprises two distinct complexes: a TatABC complex, containing multiple copies of TatA, TatB and TatC subunits, and a separate TatA complex, containing only TatA subunits. Substrates initially bind to the TatABC complex, which probably triggers association of the separate TatA complex to form the active translocon.

The protein resides in the cell membrane. In terms of biological role, part of the twin-arginine translocation (Tat) system that transports large folded proteins containing a characteristic twin-arginine motif in their signal peptide across membranes. TatA could form the protein-conducting channel of the Tat system. The polypeptide is Sec-independent protein translocase protein TatA (Micrococcus luteus (strain ATCC 4698 / DSM 20030 / JCM 1464 / CCM 169 / CCUG 5858 / IAM 1056 / NBRC 3333 / NCIMB 9278 / NCTC 2665 / VKM Ac-2230) (Micrococcus lysodeikticus)).